We begin with the raw amino-acid sequence, 519 residues long: tRNA pseudouridine synthase Pus10 (519 aa).

The disordered stretch occupies residues 70-98 (NENEEIDENTKNNEDTENKADDKSQSNEE). Basic and acidic residues predominate over residues 77–98 (ENTKNNEDTENKADDKSQSNEE). Positions 144–265 (NESEENESNI…NQKIYLQINP (122 aa)) constitute a THUMP domain. Asp334 serves as the catalytic Nucleophile. Residues Tyr398 and Tyr476 each contribute to the substrate site.

It belongs to the pseudouridine synthase Pus10 family.

The enzyme catalyses uridine(54) in tRNA = pseudouridine(54) in tRNA. It catalyses the reaction uridine(55) in tRNA = pseudouridine(55) in tRNA. Its function is as follows. Responsible for synthesis of pseudouridine from uracil-54 and uracil-55 in the psi GC loop of transfer RNAs. The sequence is that of tRNA pseudouridine synthase Pus10 from Methanococcus voltae (strain ATCC BAA-1334 / A3).